An 82-amino-acid polypeptide reads, in one-letter code: Small ribosomal subunit protein bS16 (82 aa).

The protein belongs to the bacterial ribosomal protein bS16 family.

The polypeptide is Small ribosomal subunit protein bS16 (Serratia proteamaculans (strain 568)).